The following is a 631-amino-acid chain: ATP-dependent DNA helicase 2 subunit 1 (631 aa).

The Ku domain maps to 262-487 (FYLGPNLSMS…VEFFQKIIKK (226 aa)). The interval 550–570 (AEPHKKRAAKSTTAGASGPKM) is disordered.

This sequence belongs to the ku70 family. In terms of assembly, heterodimer of a 70 kDa and a 80 kDa subunit.

The protein localises to the nucleus. It is found in the chromosome. It catalyses the reaction ATP + H2O = ADP + phosphate + H(+). Its function is as follows. Single-stranded DNA-dependent ATP-dependent helicase. Involved in non-homologous end joining (NHEJ) DNA double strand break repair. Sequence-specific DNA-binding protein that has a high affinity for a 31 bp sequence in the Yp1 gene. Site-specific DNA binding to 31 bp P element inverted repeats. This is ATP-dependent DNA helicase 2 subunit 1 (Irbp) from Drosophila melanogaster (Fruit fly).